Here is an 82-residue protein sequence, read N- to C-terminus: Defensin-like protein 7 (82 aa).

The signal sequence occupies residues 1–29 (MKSSTTSMQLIPTLFFLTILLASPEMVEG). Q30 is modified (pyrrolidone carboxylic acid). Intrachain disulfides connect C33–C77, C44–C64, C50–C71, and C54–C73.

Belongs to the DEFL family. Expressed in stems, roots, rosette leaves and flower buds.

The protein resides in the secreted. This chain is Defensin-like protein 7 (LCR75), found in Arabidopsis thaliana (Mouse-ear cress).